The primary structure comprises 187 residues: Putative carbonic anhydrase YtiB (187 aa).

Residues cysteine 38, aspartate 40, histidine 96, and cysteine 99 each contribute to the Zn(2+) site.

This sequence belongs to the beta-class carbonic anhydrase family. The cofactor is Zn(2+).

The enzyme catalyses hydrogencarbonate + H(+) = CO2 + H2O. Its function is as follows. Reversible hydration of carbon dioxide. In Bacillus subtilis (strain 168), this protein is Putative carbonic anhydrase YtiB (ytiB).